Reading from the N-terminus, the 44-residue chain is Thymosin beta-4, Y-chromosomal (44 aa).

A disordered region spans residues 1-44 (MSDKPGMAEIEKFDKSKLKKTETQEKNPLSSKETIEQERQAGES). 2 stretches are compositionally biased toward basic and acidic residues: residues 9-25 (EIEKFDKSKLKKTETQE) and 33-44 (ETIEQERQAGES).

The protein belongs to the thymosin beta family. Ubiquitous.

Its subcellular location is the cytoplasm. It localises to the cytoskeleton. Its function is as follows. Plays an important role in the organization of the cytoskeleton. Binds to and sequesters actin monomers (G actin) and therefore inhibits actin polymerization. In Homo sapiens (Human), this protein is Thymosin beta-4, Y-chromosomal (TMSB4Y).